The chain runs to 36 residues: Photosystem I reaction center subunit VIII (36 aa).

A helical membrane pass occupies residues 8–28; the sequence is SIFVPLVGLVFPAIAIASLFL.

The protein belongs to the PsaI family.

The protein resides in the plastid. The protein localises to the chloroplast thylakoid membrane. In terms of biological role, may help in the organization of the PsaL subunit. The polypeptide is Photosystem I reaction center subunit VIII (Jasminum nudiflorum (Winter jasmine)).